The primary structure comprises 183 residues: Probable actin-related protein 2/3 complex subunit 3 (183 aa).

The protein belongs to the ARPC3 family. In terms of assembly, component of the Arp2/3 complex.

It is found in the cytoplasm. The protein localises to the cytoskeleton. Its function is as follows. Functions as a component of the Arp2/3 complex which is involved in regulation of actin polymerization and together with an activating nucleation-promoting factor (NPF) mediates the formation of branched actin networks. This is Probable actin-related protein 2/3 complex subunit 3 (arx-5) from Caenorhabditis elegans.